A 575-amino-acid chain; its full sequence is 3-hydroxy-3-methylglutaryl-coenzyme A reductase 1 (575 aa).

The span at 1–13 (MDTTGRLHHRKHA) shows a compositional bias: basic residues. The interval 1 to 25 (MDTTGRLHHRKHATPVEDRSPTTPK) is disordered. 2 consecutive transmembrane segments (helical) span residues 29-49 (ALPLPLYLTNAVFFTLFFSVA) and 73-93 (EIVAIVSLIASFIYLLGFFGI). The tract at residues 97 to 160 (QSFIARASHD…PLIAPLVSEE (64 aa)) is linker. Asn-132 carries N-linked (GlcNAc...) asparagine glycosylation. Residues 161 to 575 (DEMIVNSVVD…SSKDMSKAAS (415 aa)) form a catalytic region. Residue Glu-254 is the Charge relay system of the active site. N-linked (GlcNAc...) asparagine glycosylation occurs at Asn-318. Residues Lys-386 and Asp-462 each act as charge relay system in the active site. Residues 531 to 551 (LLAAIVAGSVLAGELSLMSAI) form a helical membrane-spanning segment. The active-site Proton donor is the His-560. An N-linked (GlcNAc...) asparagine glycan is attached at Asn-564.

Belongs to the HMG-CoA reductase family.

It is found in the endoplasmic reticulum membrane. The protein localises to the mitochondrion membrane. The protein resides in the plastid membrane. The enzyme catalyses (R)-mevalonate + 2 NADP(+) + CoA = (3S)-3-hydroxy-3-methylglutaryl-CoA + 2 NADPH + 2 H(+). It functions in the pathway metabolic intermediate biosynthesis; (R)-mevalonate biosynthesis; (R)-mevalonate from acetyl-CoA: step 3/3. Catalyzes the synthesis of mevalonate. The specific precursor of all isoprenoid compounds present in plants. The sequence is that of 3-hydroxy-3-methylglutaryl-coenzyme A reductase 1 (HMGR1) from Hevea brasiliensis (Para rubber tree).